The chain runs to 353 residues: 3-isopropylmalate dehydrogenase (353 aa).

75–88 (GPKWENLPHEHKPE) lines the NAD(+) pocket. Residues Arg-95, Arg-105, Arg-133, and Asp-219 each coordinate substrate. Mg(2+) contacts are provided by Asp-219, Asp-243, and Asp-247. 276-288 (GSAPDIAGKNIAN) serves as a coordination point for NAD(+).

This sequence belongs to the isocitrate and isopropylmalate dehydrogenases family. LeuB type 1 subfamily. In terms of assembly, homodimer. It depends on Mg(2+) as a cofactor. Mn(2+) serves as cofactor.

It localises to the cytoplasm. It carries out the reaction (2R,3S)-3-isopropylmalate + NAD(+) = 4-methyl-2-oxopentanoate + CO2 + NADH. It functions in the pathway amino-acid biosynthesis; L-leucine biosynthesis; L-leucine from 3-methyl-2-oxobutanoate: step 3/4. Functionally, catalyzes the oxidation of 3-carboxy-2-hydroxy-4-methylpentanoate (3-isopropylmalate) to 3-carboxy-4-methyl-2-oxopentanoate. The product decarboxylates to 4-methyl-2 oxopentanoate. The chain is 3-isopropylmalate dehydrogenase from Chlorobium luteolum (strain DSM 273 / BCRC 81028 / 2530) (Pelodictyon luteolum).